The following is an 89-amino-acid chain: Small ribosomal subunit protein uS17 (89 aa).

The protein belongs to the universal ribosomal protein uS17 family. In terms of assembly, part of the 30S ribosomal subunit.

One of the primary rRNA binding proteins, it binds specifically to the 5'-end of 16S ribosomal RNA. This Albidiferax ferrireducens (strain ATCC BAA-621 / DSM 15236 / T118) (Rhodoferax ferrireducens) protein is Small ribosomal subunit protein uS17.